The chain runs to 114 residues: Flagellar transcriptional regulator FlhD (114 aa).

It belongs to the FlhD family. As to quaternary structure, homodimer; disulfide-linked. Forms a heterohexamer composed of two FlhC and four FlhD subunits. Each FlhC binds a FlhD dimer, forming a heterotrimer, and a hexamer assembles by dimerization of two heterotrimers.

Its subcellular location is the cytoplasm. Functionally, functions in complex with FlhC as a master transcriptional regulator that regulates transcription of several flagellar and non-flagellar operons by binding to their promoter region. Activates expression of class 2 flagellar genes, including fliA, which is a flagellum-specific sigma factor that turns on the class 3 genes. Also regulates genes whose products function in a variety of physiological pathways. In Wigglesworthia glossinidia brevipalpis, this protein is Flagellar transcriptional regulator FlhD.